We begin with the raw amino-acid sequence, 494 residues long: UPF0371 protein SUB1165 (494 aa).

It belongs to the UPF0371 family.

In Streptococcus uberis (strain ATCC BAA-854 / 0140J), this protein is UPF0371 protein SUB1165.